A 48-amino-acid polypeptide reads, in one-letter code: Large ribosomal subunit protein bL33 (48 aa).

Belongs to the bacterial ribosomal protein bL33 family.

The sequence is that of Large ribosomal subunit protein bL33 from Streptococcus mutans serotype c (strain ATCC 700610 / UA159).